The primary structure comprises 418 residues: Glutamyl-tRNA reductase (418 aa).

Substrate is bound by residues 49-52 (TCNR), S105, 110-112 (EPQ), and Q116. The active-site Nucleophile is the C50. 185-190 (GAGEMI) serves as a coordination point for NADP(+).

It belongs to the glutamyl-tRNA reductase family. As to quaternary structure, homodimer.

The catalysed reaction is (S)-4-amino-5-oxopentanoate + tRNA(Glu) + NADP(+) = L-glutamyl-tRNA(Glu) + NADPH + H(+). It functions in the pathway porphyrin-containing compound metabolism; protoporphyrin-IX biosynthesis; 5-aminolevulinate from L-glutamyl-tRNA(Glu): step 1/2. Functionally, catalyzes the NADPH-dependent reduction of glutamyl-tRNA(Glu) to glutamate 1-semialdehyde (GSA). In Aromatoleum aromaticum (strain DSM 19018 / LMG 30748 / EbN1) (Azoarcus sp. (strain EbN1)), this protein is Glutamyl-tRNA reductase.